A 186-amino-acid polypeptide reads, in one-letter code: Ribosome-recycling factor (186 aa).

Belongs to the RRF family.

It is found in the cytoplasm. Responsible for the release of ribosomes from messenger RNA at the termination of protein biosynthesis. May increase the efficiency of translation by recycling ribosomes from one round of translation to another. The protein is Ribosome-recycling factor of Bordetella avium (strain 197N).